The primary structure comprises 417 residues: MAEIKNYTLNFGPQHPAAHGVLRLVLELDGEVIQRADPHIGLLHRATEKLAETKTFIQSVPYMDRLDYVSMMVNEHGYVMAIEKLLGIEVPVRAQYIRVMFDEVTRVLNHLMWIGAHALDVGAMAVFLYAFREREDLMDVYEAVSGARMHAAYYRPGGVYRDLPDAMPQYKASKIRNAKALSKMNENRQGSLLDFIDDFFTRFPKCVDEYETLLTDNRIWKQRLVGIGVVSPERALNLGMTGAMLRGSGIEWDLRKKQPYEVYDKLDFDIPVGVNGDCYDRYLVRVEEMRQSTRIVKQCIEWLRKNPGPVMIDNHKVAPPSRVGMKSNMEELIHHFKLFTEGFHVPEGEAYAAVEHPKGEFGIYLISDGANKPYRLKIRAPGYAHLSTLDEMARGHMIADAVTIIGTQDIVFGEVDR.

The protein belongs to the complex I 49 kDa subunit family. As to quaternary structure, NDH-1 is composed of 14 different subunits. Subunits NuoB, C, D, E, F, and G constitute the peripheral sector of the complex.

It localises to the cell inner membrane. The enzyme catalyses a quinone + NADH + 5 H(+)(in) = a quinol + NAD(+) + 4 H(+)(out). Its function is as follows. NDH-1 shuttles electrons from NADH, via FMN and iron-sulfur (Fe-S) centers, to quinones in the respiratory chain. The immediate electron acceptor for the enzyme in this species is believed to be ubiquinone. Couples the redox reaction to proton translocation (for every two electrons transferred, four hydrogen ions are translocated across the cytoplasmic membrane), and thus conserves the redox energy in a proton gradient. The protein is NADH-quinone oxidoreductase subunit D of Paraburkholderia phytofirmans (strain DSM 17436 / LMG 22146 / PsJN) (Burkholderia phytofirmans).